The chain runs to 167 residues: Beta-3 adrenergic receptor (167 aa).

Over 1–25 the chain is Extracellular; sequence RVGADAEAQECHSNPRCCSFASNMP. C11 and C17 are oxidised to a cystine. A helical membrane pass occupies residues 26-47; sequence YALLSSSVSFYLPLLVMLFVYA. The Cytoplasmic segment spans residues 48 to 114; that stretch reads RVFVVAKRQR…LPLREHRALR (67 aa). Residues 66 to 97 form a disordered region; that stretch reads RFPPEESPRSPSRSPSPVAGGTGEAPDGVPSC. The chain crosses the membrane as a helical span at residues 115 to 136; sequence TLGLIMGIFSLCWLPFFLANVL. Residues 137-148 are Extracellular-facing; it reads RALAGPSIVPNG. The helical transmembrane segment at 149-167 threads the bilayer; it reads VFIALNWLGYANSAFNPLI.

It belongs to the G-protein coupled receptor 1 family. Adrenergic receptor subfamily. ADRB3 sub-subfamily. As to quaternary structure, interacts with ARRDC3.

It is found in the cell membrane. Beta-adrenergic receptors mediate the catecholamine-induced activation of adenylate cyclase through the action of G proteins. Beta-3 is involved in the regulation of lipolysis and thermogenesis. The protein is Beta-3 adrenergic receptor (ADRB3) of Meriones unguiculatus (Mongolian jird).